The sequence spans 1766 residues: DNA-directed RNA polymerase II subunit RPB1-B (1766 aa).

Zn(2+) contacts are provided by cysteine 69, cysteine 72, cysteine 79, and histidine 82. The Mg(2+) site is built by aspartate 487, aspartate 489, and aspartate 491. A bridging helix region spans residues proline 813–glutamate 825. Residues histidine 1660 to glutamine 1766 form a disordered region. The span at arginine 1706–aspartate 1716 shows a compositional bias: basic and acidic residues. Residues proline 1742–alanine 1756 are compositionally biased toward low complexity.

The protein belongs to the RNA polymerase beta' chain family. As to quaternary structure, component of the RNA polymerase II (Pol II) complex consisting of 12 subunits.

The protein localises to the nucleus. The enzyme catalyses RNA(n) + a ribonucleoside 5'-triphosphate = RNA(n+1) + diphosphate. DNA-dependent RNA polymerase catalyzes the transcription of DNA into RNA using the four ribonucleoside triphosphates as substrates. Largest and catalytic component of RNA polymerase II which synthesizes mRNA precursors and many functional non-coding RNAs. Forms the polymerase active center together with the second largest subunit. Pol II is the central component of the basal RNA polymerase II transcription machinery. It is composed of mobile elements that move relative to each other. RPB1 is part of the core element with the central large cleft, the clamp element that moves to open and close the cleft and the jaws that are thought to grab the incoming DNA template. At the start of transcription, a single-stranded DNA template strand of the promoter is positioned within the central active site cleft of Pol II. A bridging helix emanates from RPB1 and crosses the cleft near the catalytic site and is thought to promote translocation of Pol II by acting as a ratchet that moves the RNA-DNA hybrid through the active site by switching from straight to bent conformations at each step of nucleotide addition. During transcription elongation, Pol II moves on the template as the transcript elongates. The sequence is that of DNA-directed RNA polymerase II subunit RPB1-B (TRP5.9) from Trypanosoma brucei brucei.